The sequence spans 370 residues: UDP-N-acetylglucosamine--N-acetylmuramyl-(pentapeptide) pyrophosphoryl-undecaprenol N-acetylglucosamine transferase (370 aa).

Residues 15 to 17 (TGG), N129, R170, S199, I254, and Q299 contribute to the UDP-N-acetyl-alpha-D-glucosamine site.

This sequence belongs to the glycosyltransferase 28 family. MurG subfamily.

It is found in the cell inner membrane. The catalysed reaction is di-trans,octa-cis-undecaprenyl diphospho-N-acetyl-alpha-D-muramoyl-L-alanyl-D-glutamyl-meso-2,6-diaminopimeloyl-D-alanyl-D-alanine + UDP-N-acetyl-alpha-D-glucosamine = di-trans,octa-cis-undecaprenyl diphospho-[N-acetyl-alpha-D-glucosaminyl-(1-&gt;4)]-N-acetyl-alpha-D-muramoyl-L-alanyl-D-glutamyl-meso-2,6-diaminopimeloyl-D-alanyl-D-alanine + UDP + H(+). Its pathway is cell wall biogenesis; peptidoglycan biosynthesis. In terms of biological role, cell wall formation. Catalyzes the transfer of a GlcNAc subunit on undecaprenyl-pyrophosphoryl-MurNAc-pentapeptide (lipid intermediate I) to form undecaprenyl-pyrophosphoryl-MurNAc-(pentapeptide)GlcNAc (lipid intermediate II). This chain is UDP-N-acetylglucosamine--N-acetylmuramyl-(pentapeptide) pyrophosphoryl-undecaprenol N-acetylglucosamine transferase, found in Magnetococcus marinus (strain ATCC BAA-1437 / JCM 17883 / MC-1).